The primary structure comprises 115 residues: Somatostatin-1 (115 aa).

Residues 1–24 (MLSCRFQCALVLLSLAVVFSKVSA) form the signal peptide. Residues 25–88 (APSDLRLRQL…QDEVRLELDR (64 aa)) constitute a propeptide that is removed on maturation. A disordered region spans residues 65–95 (NDALDSSDLSRGADQDEVRLELDRSANSSPL). Residues 75–88 (RGADQDEVRLELDR) are compositionally biased toward basic and acidic residues. The cysteines at positions 104 and 115 are disulfide-linked.

This sequence belongs to the somatostatin family.

It is found in the secreted. Somatostatin inhibits the release of somatotropin. The sequence is that of Somatostatin-1 (sst1) from Protopterus annectens (African lungfish).